Here is a 101-residue protein sequence, read N- to C-terminus: Large ribosomal subunit protein bL21 (101 aa).

The protein belongs to the bacterial ribosomal protein bL21 family. In terms of assembly, part of the 50S ribosomal subunit. Contacts protein L20.

In terms of biological role, this protein binds to 23S rRNA in the presence of protein L20. The sequence is that of Large ribosomal subunit protein bL21 from Micrococcus luteus (strain ATCC 4698 / DSM 20030 / JCM 1464 / CCM 169 / CCUG 5858 / IAM 1056 / NBRC 3333 / NCIMB 9278 / NCTC 2665 / VKM Ac-2230) (Micrococcus lysodeikticus).